Here is a 319-residue protein sequence, read N- to C-terminus: Ribonuclease Z (319 aa).

His-62, His-64, Asp-66, His-67, His-145, Asp-215, and His-273 together coordinate Zn(2+). The active-site Proton acceptor is the Asp-66.

It belongs to the RNase Z family. In terms of assembly, homodimer. Zn(2+) serves as cofactor.

It catalyses the reaction Endonucleolytic cleavage of RNA, removing extra 3' nucleotides from tRNA precursor, generating 3' termini of tRNAs. A 3'-hydroxy group is left at the tRNA terminus and a 5'-phosphoryl group is left at the trailer molecule.. Its function is as follows. Zinc phosphodiesterase, which displays some tRNA 3'-processing endonuclease activity. Probably involved in tRNA maturation, by removing a 3'-trailer from precursor tRNA. The polypeptide is Ribonuclease Z (Borrelia garinii subsp. bavariensis (strain ATCC BAA-2496 / DSM 23469 / PBi) (Borreliella bavariensis)).